A 1045-amino-acid chain; its full sequence is MEPWVPQWPPPSRGRPRSPVPDSERGLQRDGYHRPAPHSWHNGERLPQWQDVQGSPQPQQDPRAGPQRPQHVPRLGAWQQHAPAVDYYEGGHRGQLYSRPSYESLYPALTEDYAYGSHYYHGHPQWQQEGRVPRQGSPYVWHDSYRDQRHLSEHRPENQSRTFRRDSETQFQRSNRRNPHKDGPASSSGQERPGELFAEGRLSWGLTSQPSLGSKSNLLQQREVGLSSSSYELSQYMVDAPELYDPAAAAGWRPVPAEDIPVAGPKAPKKFYIPHVSVGFGPRGQLVCVSPSSPMDGQTALVEVHSMEVILNDLEEQEEMRSFPGPLIREDVHKVDVMTFCQQKAAQSRKSGTPGGRDSALLWQLLVLLCRQNGSMAGSDIAELLLQDCKKLEKYKKQPPVANLINLADEDWPVLSSGPRNLLTGETPPSVETPAQVVGKFTQLLYYGRKKEALEWAMKNHLWGHALFLSSKMEPRTYKWVMSGFTSTLALNDPLQTLFQLLSGRIPQAATCCGDTQWGDWRPHLAVILSNQAGDPELRRRVIVSMGDTLASKGLVEAAHFCYLMAQVPFGHYTVNADRLALLGSSHSQEFPRFASAEAIQRTEVLEYCRTLGGRPGLIASFQVYKLLYASRLADYGLASQAFHYCEAIGTAVLSQAESSHPVLLVELIKLAERLKLADPLVLERRGGDEAWEPDWLQRLRRHQELQQKAAADAGEPHSANLDTPGATGTTESTFYQDLPAYQRFSDAPGCEPAPWPTPTQTGCPSPFPSQPGPAAGPAGAPVPLYSVPETHFPVSTEEPQAVGGQVWEDTRQTHSAPGENIASPETFQEPEGLEVISTPQELLAPRAQSFSESCPGSVKEADEESSDEAGRKSARSPAHTGKLADATASAKRSGFGWFSWFRSKPTENAPHSGDEDSSDSPDSEQENPRAPSPREAGLGLSPPPLLESPPLPGASAFGGGTGRGEAQGAMSSQETAAGTGTGGLSGPESASSELYSNPSVLLPPPSVKGAVPLYNPSQVPQLPTAAGLSRPNRLAQRRYPTQPC.

Residues 1 to 13 (MEPWVPQWPPPSR) show a composition bias toward pro residues. The segment at 1–78 (MEPWVPQWPP…PQHVPRLGAW (78 aa)) is disordered. Residues 22 to 33 (DSERGLQRDGYH) show a composition bias toward basic and acidic residues. Positions 50 to 60 (QDVQGSPQPQQ) are enriched in polar residues. A phosphoserine mark is found at Ser55 and Ser137. Residues 149–168 (RHLSEHRPENQSRTFRRDSE) are compositionally biased toward basic and acidic residues. 4 disordered regions span residues 149 to 193 (RHLS…QERP), 707 to 733 (QQKAAADAGEPHSANLDTPGATGTTES), 748 to 789 (APGC…YSVP), and 813 to 1045 (QTHS…TQPC). A Phosphoserine modification is found at Ser186. Residues 267-711 (APKKFYIPHV…RHQELQQKAA (445 aa)) form a central conserved domain (CCD); required for localization to endoplasmic reticulum exit sites region. The span at 773–784 (GPAAGPAGAPVP) shows a compositional bias: low complexity. Phosphoserine is present on residues Ser852, Ser858, Ser866, and Ser867. The span at 916-926 (EDSSDSPDSEQ) shows a compositional bias: acidic residues. The span at 942-953 (SPPPLLESPPLP) shows a compositional bias: pro residues. A compositionally biased stretch (gly residues) spans 957–966 (AFGGGTGRGE). Residues 989-998 (ESASSELYSN) show a composition bias toward polar residues.

The protein belongs to the SEC16 family. In terms of assembly, SEC16A and SEC16B are each present in multiple copies in a heteromeric complex. Interacts with TFG. Interacts with SEC13. In terms of tissue distribution, liver.

The protein localises to the endoplasmic reticulum membrane. Its subcellular location is the golgi apparatus membrane. In terms of biological role, plays a role in the organization of the endoplasmic reticulum exit sites (ERES), also known as transitional endoplasmic reticulum (tER). Required for secretory cargo traffic from the endoplasmic reticulum to the Golgi apparatus. Involved in peroxisome biogenesis. Regulates the transport of peroxisomal biogenesis factors PEX3 and PEX16 from the ER to peroxisomes. The sequence is that of Protein transport protein Sec16B (SEC16B) from Oryctolagus cuniculus (Rabbit).